The sequence spans 706 residues: GDNF-inducible zinc finger protein 1 (706 aa).

The region spanning 31-103 (CDVTVSIENQ…VYTAKVRVEE (73 aa)) is the BTB domain. Residues 149–165 (VEASSGPQVSVTPSSKA) are compositionally biased toward polar residues. 2 disordered regions span residues 149-220 (VEAS…PKIR) and 242-308 (RRLR…KDGE). 2 stretches are compositionally biased toward basic and acidic residues: residues 197–212 (PSKK…KDVA) and 242–277 (RRLR…EPAA). C2H2-type zinc fingers lie at residues 315–337 (FQCT…IKYH), 346–369 (YRCD…RHVH), 375–398 (FPCE…LQVH), 405–427 (HRCG…ERTH), 433–455 (YGCT…LRVH), 461–483 (FVCD…KRCH), 489–511 (FMCE…NRIH), 517–539 (FKCE…IKVH), 545–567 (YCCD…HRIH), and 573–595 (YMCN…TSIH). Phosphoserine is present on Ser611.

The protein belongs to the krueppel C2H2-type zinc-finger protein family. Interacts with NCL. Expressed in several tissues, with highest levels in liver. Also expressed in embryos from 7 to 17 dpc.

It is found in the nucleus. It localises to the cytoplasm. The protein localises to the nucleolus. Its function is as follows. Transcriptional repressor that binds the GZF1 responsive element (GRE) (consensus: 5'-TGCGCN[TG][CA]TATA-3'). May be regulating VSX2/HOX10 expression. The polypeptide is GDNF-inducible zinc finger protein 1 (Mus musculus (Mouse)).